A 375-amino-acid chain; its full sequence is MFISEIQLKNYRNYEKLELSFEDKVNVIIGENAQGKTNLMEAIYVLAMAKSHRTSNDRELIRWDEDFGQIKGKLQKRNSSLSLELNISKKGKKAKLNQLEQQKLSQYIGVMNVVMFAPEDLNLVKGSPQVRRRFLDMELGQIAPVYLYELSQYQKVLTQRNHLLKKMQGNSKNEETMLDVFTLQLIEHGAKILQKRFEFLHLLQEWAAPIHRGISRGLEELEIVYKPSVDVSESMDLSKIKEVYYESFQSVKQREIFRGTTLIGPHRDDLQFFVNSKNVQVFGSQGQQRTTALSLKLAEIELIYSEVKEYPILLLDDVLSELDDYRQSHLLNTIQGKVQTFVTTTSVDGIEHETLKEAKTIHVTNGTVDCEIDRE.

30–37 serves as a coordination point for ATP; the sequence is GENAQGKT.

The protein belongs to the RecF family.

The protein resides in the cytoplasm. Its function is as follows. The RecF protein is involved in DNA metabolism; it is required for DNA replication and normal SOS inducibility. RecF binds preferentially to single-stranded, linear DNA. It also seems to bind ATP. This Bacillus cereus (strain B4264) protein is DNA replication and repair protein RecF.